Consider the following 389-residue polypeptide: Trans-2-enoyl-CoA reductase [NADH] (389 aa).

NAD(+) contacts are provided by residues 47–52, 73–74, 110–111, and 138–139; these read GASTGY, FE, DA, and LA. Tyrosine 224 lines the substrate pocket. Tyrosine 234 serves as the catalytic Proton donor. NAD(+) contacts are provided by residues lysine 243 and 272–274; that span reads LVT.

The protein belongs to the TER reductase family. As to quaternary structure, monomer.

The catalysed reaction is a 2,3-saturated acyl-CoA + NAD(+) = a (2E)-enoyl-CoA + NADH + H(+). It functions in the pathway lipid metabolism; fatty acid biosynthesis. Functionally, involved in the fatty acid synthesis (FAS II). Catalyzes the reduction of a carbon-carbon double bond in an enoyl moiety that is covalently linked to a coenzyme A (CoA). The protein is Trans-2-enoyl-CoA reductase [NADH] of Clostridium perfringens (strain SM101 / Type A).